Reading from the N-terminus, the 1157-residue chain is Nitric oxide synthase, inducible (1157 aa).

Residues 23 to 27 carry the DINNN-motif; mediates interaction with SPSB1, SPSB2 and SPSB4 motif; sequence DINNN. The disordered stretch occupies residues 29 to 64; that stretch reads EKLRQASSSPVTQDDPKCPSRSRHRNECSQPLAETA. Positions 110 and 115 each coordinate Zn(2+). Heme b is bound at residue Cys200. Residues Gln263, Trp372, Tyr373, and Glu377 each coordinate L-arginine. (6R)-L-erythro-5,6,7,8-tetrahydrobiopterin-binding residues include Arg381, Ile462, Trp463, and Phe476. Tyr491 serves as a coordination point for heme b. Residues 515–535 are calmodulin-binding; sequence FKVLVKAVLFAAVLMHKTMAA. The Flavodoxin-like domain occupies 539–677; the sequence is ATILFATETG…AFRGWAVQTF (139 aa). Thr545, Glu546, Thr547, Arg549, Ser550, Ser591, Thr592, Ser628, Cys635, Glu661, and Gln665 together coordinate FMN. The FAD-binding FR-type domain maps to 730-970; the sequence is KYVFSMRLKS…VRSASGFQLP (241 aa). Arg750 provides a ligand contact to NADP(+). FAD is bound by residues His772, Arg906, Tyr908, Ser909, Thr924, and Ala926. An NADP(+)-binding site is contributed by Thr929. FAD contacts are provided by Tyr930, Val943, Cys944, and Ser945. 8 residues coordinate NADP(+): Thr984, Arg1017, Ser1046, Arg1047, Lys1053, Tyr1055, Gln1057, and Asp1090. The disordered stretch occupies residues 1138 to 1157; the sequence is KEGAVGPPSDPRAPGAHGKS.

This sequence belongs to the NOS family. In terms of assembly, homodimer. Interacts with NHERF1. Interacts with GAPDH; induced by oxidatively-modified low-densitity lipoprotein (LDL(ox)). Interacts with S100A8 and S100A9 to form the iNOS-S100A8/9 transnitrosylase complex. Interacts with SPSB1, SPSB2 and SPSB4. Interacts with ELOC and CUL5 in the presence of SPSB1 or SPSB2 or SPSB4. Forms a complex with ASL, ASS1 and HSP90AA1; the complex regulates cell-autonomous L-arginine synthesis and citrulline recycling while channeling extracellular L-arginine to nitric oxide synthesis pathway. Heme b serves as cofactor. Requires FAD as cofactor. The cofactor is FMN. (6R)-L-erythro-5,6,7,8-tetrahydrobiopterin is required as a cofactor. In terms of processing, polyubiquitinated; mediated by SPSB1, SPSB2 and SPSB4, leading to proteasomal degradation. Detected in both stimulated and unstimulated immune cells and macrophages with little or no up-regulation following cellular stimulation with lipopolysaccharides (LPS) or concanavalin A (ConA).

It is found in the cytoplasm. The protein resides in the cytosol. It catalyses the reaction 2 L-arginine + 3 NADPH + 4 O2 + H(+) = 2 L-citrulline + 2 nitric oxide + 3 NADP(+) + 4 H2O. Its activity is regulated as follows. Not stimulated by calcium/calmodulin. In terms of biological role, produces nitric oxide (NO) which is a messenger molecule with diverse functions throughout the body. In macrophages, NO mediates tumoricidal and bactericidal actions. Also has nitrosylase activity and mediates cysteine S-nitrosylation of cytoplasmic target proteins such PTGS2/COX2. As component of the iNOS-S100A8/9 transnitrosylase complex involved in the selective inflammatory stimulus-dependent S-nitrosylation of GAPDH implicated in regulation of the GAIT complex activity and probably multiple targets including ANXA5, EZR, MSN and VIM. Involved in inflammation, enhances the synthesis of pro-inflammatory mediators such as IL6 and IL8. The chain is Nitric oxide synthase, inducible (NOS2) from Sus scrofa (Pig).